Consider the following 170-residue polypeptide: Protein-export protein SecB (170 aa).

Belongs to the SecB family. As to quaternary structure, homotetramer, a dimer of dimers. One homotetramer interacts with 1 SecA dimer.

It localises to the cytoplasm. In terms of biological role, one of the proteins required for the normal export of preproteins out of the cell cytoplasm. It is a molecular chaperone that binds to a subset of precursor proteins, maintaining them in a translocation-competent state. It also specifically binds to its receptor SecA. In Pasteurella multocida (strain Pm70), this protein is Protein-export protein SecB.